The following is a 430-amino-acid chain: Signal recognition particle protein (430 aa).

GTP is bound by residues 105–112 (GLQGSGKT), 187–191 (DTAGR), and 245–248 (TKLD).

Belongs to the GTP-binding SRP family. SRP54 subfamily. As to quaternary structure, part of the signal recognition particle protein translocation system, which is composed of SRP and FtsY.

The protein resides in the cytoplasm. The catalysed reaction is GTP + H2O = GDP + phosphate + H(+). In terms of biological role, involved in targeting and insertion of nascent membrane proteins into the cytoplasmic membrane. Binds to the hydrophobic signal sequence of the ribosome-nascent chain (RNC) as it emerges from the ribosomes. The SRP-RNC complex is then targeted to the cytoplasmic membrane where it interacts with the SRP receptor FtsY. The protein is Signal recognition particle protein of Thermus aquaticus.